A 400-amino-acid polypeptide reads, in one-letter code: Large envelope protein (400 aa).

The residue at position 1 (Met-1) is an N-acetylmethionine. Gly-2 carries the N-myristoyl glycine; by host lipid modification. The tract at residues 2-119 (GAPLSTTRRG…PPLRDTHPQA (118 aa)) is pre-S1. The segment at 2–174 (GAPLSTTRRG…FSKTGGPAMN (173 aa)) is pre-S. At 2 to 181 (GAPLSTTRRG…AMNMDSITSG (180 aa)) the chain is on the virion surface; in external conformation side. Residues 2–253 (GAPLSTTRRG…PGYRWMCLRR (252 aa)) are Intravirion; in internal conformation-facing. An N-linked (GlcNAc...) asparagine glycan is attached at Pro-4. The interval 84–114 (VLTTLPADPPPASTNRRSGRKPTPVSPPLRD) is disordered. A pre-S2 region spans residues 120–174 (MQWNSTQFHQALLDPRVRALYFPAGGSSSETQNPAPTIASLTSSIFSKTGGPAMN). A helical membrane pass occupies residues 182-202 (LLGPLLVLQAVCFLLTKILTI). The Intravirion; in external conformation portion of the chain corresponds to 203–253 (PQSLDSWWTSLNFLGGLPGCPGQNSQSPTSNHLPTSCPPTCPGYRWMCLRR). A helical transmembrane segment spans residues 254–274 (FIIFLFILLLCLIFLLVLLDY). Residues 275–348 (QGMLPVCPLI…WASARFSWLS (74 aa)) are Virion surface-facing. A glycan (N-linked (GlcNAc...) asparagine; by host) is linked at Asn-320. A helical membrane pass occupies residues 349 to 369 (LLVQFVQWCVGLSPTVWLLVI). Residues 370–375 (WMIWYW) are Intravirion-facing. A helical transmembrane segment spans residues 376–398 (GPNLCSILSPFIPLLPIFCYLWV). Over 399–400 (SI) the chain is Virion surface.

Belongs to the orthohepadnavirus major surface antigen family. In terms of assembly, in its internal form (Li-HBsAg), interacts with the capsid protein and with the isoform S. Interacts with host chaperone CANX. Associates with host chaperone CANX through its pre-S2 N glycan; this association may be essential for isoform M proper secretion. As to quaternary structure, interacts with isoform L. Interacts with the antigens of satellite virus HDV (HDVAgs); this interaction is required for encapsidation of HDV genomic RNA. Post-translationally, isoform M is N-terminally acetylated by host at a ratio of 90%, and N-glycosylated by host at the pre-S2 region. Myristoylated.

Its subcellular location is the virion membrane. Functionally, the large envelope protein exists in two topological conformations, one which is termed 'external' or Le-HBsAg and the other 'internal' or Li-HBsAg. In its external conformation the protein attaches the virus to cell receptors and thereby initiating infection. This interaction determines the species specificity and liver tropism. This attachment induces virion internalization predominantly through caveolin-mediated endocytosis. The large envelope protein also assures fusion between virion membrane and endosomal membrane. In its internal conformation the protein plays a role in virion morphogenesis and mediates the contact with the nucleocapsid like a matrix protein. In terms of biological role, the middle envelope protein plays an important role in the budding of the virion. It is involved in the induction of budding in a nucleocapsid independent way. In this process the majority of envelope proteins bud to form subviral lipoprotein particles of 22 nm of diameter that do not contain a nucleocapsid. The sequence is that of Large envelope protein from Homo sapiens (Human).